Reading from the N-terminus, the 446-residue chain is Tubulin gamma chain (446 aa).

GTP is bound at residue 142–148 (AGGTGSG).

This sequence belongs to the tubulin family. Interacts with mto1. Interacts with mto2.

It is found in the cytoplasm. The protein localises to the cytoskeleton. The protein resides in the microtubule organizing center. Its subcellular location is the spindle pole body. In terms of biological role, tubulin is the major constituent of microtubules. The gamma chain is found at microtubule organizing centers (MTOC) such as the spindle poles or the centrosome, suggesting that it is involved in the minus-end nucleation of microtubule assembly. This Schizosaccharomyces pombe (strain 972 / ATCC 24843) (Fission yeast) protein is Tubulin gamma chain.